The sequence spans 297 residues: 3-methyl-2-oxobutanoate hydroxymethyltransferase (297 aa).

Positions 1 to 15 (MSEQISEQSEQNVYG) are enriched in polar residues. Residues 1–40 (MSEQISEQSEQNVYGASSPVPAGESSPSAASAPRTKVRTH) form a disordered region. Over residues 16–33 (ASSPVPAGESSPSAASAP) the composition is skewed to low complexity. The Mg(2+) site is built by Asp-78 and Asp-117. Residues 78 to 79 (DS), Asp-117, and Lys-147 each bind 3-methyl-2-oxobutanoate. Mg(2+) is bound at residue Glu-149. Residue Glu-215 is the Proton acceptor of the active site.

The protein belongs to the PanB family. Homodecamer; pentamer of dimers. Mg(2+) is required as a cofactor.

It localises to the cytoplasm. It catalyses the reaction 3-methyl-2-oxobutanoate + (6R)-5,10-methylene-5,6,7,8-tetrahydrofolate + H2O = 2-dehydropantoate + (6S)-5,6,7,8-tetrahydrofolate. Its pathway is cofactor biosynthesis; (R)-pantothenate biosynthesis; (R)-pantoate from 3-methyl-2-oxobutanoate: step 1/2. Functionally, catalyzes the reversible reaction in which hydroxymethyl group from 5,10-methylenetetrahydrofolate is transferred onto alpha-ketoisovalerate to form ketopantoate. The chain is 3-methyl-2-oxobutanoate hydroxymethyltransferase from Mycobacterium marinum (strain ATCC BAA-535 / M).